We begin with the raw amino-acid sequence, 348 residues long: MLCLSLMRIFCSKCLEEQECPLPWELEKYEIWVKKEAETNEKWGEDPYNRPIERLLKYSVINLDKPSGPTSHQVVAWVRDIVGVKAGHGGTLDPKVTGVLPIAIGEATKVLQTLLIAGKEYVALMHLHKEVSEKDIIKVMSKFVGTIIQTPPLRSAVKKRPRKKKVYCIKIIEIDGKDVLFRVSTQGGVYIRKLIHDIGVKLGVGAHMQELRRIKSGPFHENNSVYLQDIVDSLYFWKEEGNEEYIRKVFLPVEEAVKHLKKIYILDSAVAAIVHGANLAVPGIAKLYSNIKKGDLVSIHTLKGELVAIGIALMDSKEMLEKKRGIAVDIERVFMKPGLYPKMWVSQG.

The active-site Nucleophile is aspartate 93. The 76-residue stretch at 260-335 (LKKIYILDSA…IAVDIERVFM (76 aa)) folds into the PUA domain.

This sequence belongs to the pseudouridine synthase TruB family. Type 2 subfamily.

It carries out the reaction uridine(55) in tRNA = pseudouridine(55) in tRNA. In terms of biological role, could be responsible for synthesis of pseudouridine from uracil-55 in the psi GC loop of transfer RNAs. The polypeptide is Probable tRNA pseudouridine synthase B (Nanoarchaeum equitans (strain Kin4-M)).